The primary structure comprises 350 residues: MSASSTAGQAGLSYRDAGVDIDAGDALVDRIKPFAKRTMREGVMAGIGGFGALFELSKKYQEPVLVSGTDGVGTKLKLAFQLNRHDTVGQDLVAMSVNDILVQGAEPLFFLDYFACGKLDVDTAATVIQGIARGCELAGCALIGGETAEMPTMYPDGEYDLAGFAVGAVEKKKIIDGTTITPGDVVLGLASSGAHSNGYSLVRKIIEVAKPDLDADFHGQRLQDAIMAPTRIYVKPLLSLIETLPVKGMAHITGGGLTENVPRVLPQNTTAVLQRDAWALPPLFQWLQSQGRVADDEMHRVFNCGIGMVVIVAKEDAERAIRHLQAAGEAVWEIGEIRERAEGQAQTVVV.

It belongs to the AIR synthase family.

The protein resides in the cytoplasm. It catalyses the reaction 2-formamido-N(1)-(5-O-phospho-beta-D-ribosyl)acetamidine + ATP = 5-amino-1-(5-phospho-beta-D-ribosyl)imidazole + ADP + phosphate + H(+). It functions in the pathway purine metabolism; IMP biosynthesis via de novo pathway; 5-amino-1-(5-phospho-D-ribosyl)imidazole from N(2)-formyl-N(1)-(5-phospho-D-ribosyl)glycinamide: step 2/2. The sequence is that of Phosphoribosylformylglycinamidine cyclo-ligase from Cupriavidus pinatubonensis (strain JMP 134 / LMG 1197) (Cupriavidus necator (strain JMP 134)).